The following is a 131-amino-acid chain: Transcriptional activator protein (131 aa).

Residues 13–28 (KAQHRIAKKRAVRRRR) carry the Nuclear localization signal motif. Residues 33-52 (CGCSIYIHINCAKDGNGFTH) fold into a zinc finger. Residues 78 to 131 (DVQXGGSTLHAHKDIPHTNPVQPQPEESTKSSQSVPELPSLDGIDSSFWDDIFE) are disordered. A transactivation region spans residues 117–131 (SLDGIDSSFWDDIFE).

This sequence belongs to the geminiviridae transcriptional activator protein family. Monomer. Homodimer. Homooligomer. Self-interaction correlates with nuclear localization and efficient activation of transcription. Monomers suppress local silencing by interacting with and inactivating host adenosine kinase 2 (ADK2) in the cytoplasm. Interacts with and inhibits host SNF1 kinase. Binds to ssDNA. Phosphorylated.

It is found in the host nucleus. The protein localises to the host cytoplasm. Strong activator of the late viral genes promoters. Enhances the expression of the capsid protein and nuclear shuttle protein. Acts as a suppressor of RNA-mediated gene silencing, also known as post-transcriptional gene silencing (PTGS), a mechanism of plant viral defense that limits the accumulation of viral RNAs. Suppresses the host RNA silencing by inhibiting adenosine kinase 2 (ADK2), a kinase involved in a general methylation pathway. Also suppresses the host basal defense by interacting with and inhibiting SNF1 kinase, a key regulator of cell metabolism implicated in innate antiviral defense. Determines pathogenicity. The sequence is that of Transcriptional activator protein from Cucurbita moschata (Winter crookneck squash).